Consider the following 190-residue polypeptide: Protein GrpE (190 aa).

The segment at 1-33 is disordered; the sequence is MSEQEKDQNNAEPQVETVEEQQAAAAAEAVEPT. The span at 11–32 shows a compositional bias: low complexity; sequence AEPQVETVEEQQAAAAAEAVEP.

It belongs to the GrpE family. As to quaternary structure, homodimer.

The protein resides in the cytoplasm. Its function is as follows. Participates actively in the response to hyperosmotic and heat shock by preventing the aggregation of stress-denatured proteins, in association with DnaK and GrpE. It is the nucleotide exchange factor for DnaK and may function as a thermosensor. Unfolded proteins bind initially to DnaJ; upon interaction with the DnaJ-bound protein, DnaK hydrolyzes its bound ATP, resulting in the formation of a stable complex. GrpE releases ADP from DnaK; ATP binding to DnaK triggers the release of the substrate protein, thus completing the reaction cycle. Several rounds of ATP-dependent interactions between DnaJ, DnaK and GrpE are required for fully efficient folding. The protein is Protein GrpE of Alcanivorax borkumensis (strain ATCC 700651 / DSM 11573 / NCIMB 13689 / SK2).